A 716-amino-acid chain; its full sequence is Fatty acid oxidation complex subunit alpha (716 aa).

The tract at residues 1-189 (MIYQSPTIQV…KVGAVDAVVA (189 aa)) is enoyl-CoA hydratase/isomerase. Asp296 is a binding site for substrate. The tract at residues 311-716 (KEVNNAAVLG…AANNGSYYQA (406 aa)) is 3-hydroxyacyl-CoA dehydrogenase. Residues Met324, Asp343, 400–402 (VVE), Lys407, and Ser429 each bind NAD(+). The active-site For 3-hydroxyacyl-CoA dehydrogenase activity is the His450. Asn453 lines the NAD(+) pocket. 2 residues coordinate substrate: Asn500 and Tyr660.

It in the N-terminal section; belongs to the enoyl-CoA hydratase/isomerase family. This sequence in the C-terminal section; belongs to the 3-hydroxyacyl-CoA dehydrogenase family. As to quaternary structure, heterotetramer of two alpha chains (FadB) and two beta chains (FadA).

The catalysed reaction is a (3S)-3-hydroxyacyl-CoA + NAD(+) = a 3-oxoacyl-CoA + NADH + H(+). It catalyses the reaction a (3S)-3-hydroxyacyl-CoA = a (2E)-enoyl-CoA + H2O. It carries out the reaction a 4-saturated-(3S)-3-hydroxyacyl-CoA = a (3E)-enoyl-CoA + H2O. The enzyme catalyses (3S)-3-hydroxybutanoyl-CoA = (3R)-3-hydroxybutanoyl-CoA. The catalysed reaction is a (3Z)-enoyl-CoA = a 4-saturated (2E)-enoyl-CoA. It catalyses the reaction a (3E)-enoyl-CoA = a 4-saturated (2E)-enoyl-CoA. Its pathway is lipid metabolism; fatty acid beta-oxidation. Its function is as follows. Involved in the aerobic and anaerobic degradation of long-chain fatty acids via beta-oxidation cycle. Catalyzes the formation of 3-oxoacyl-CoA from enoyl-CoA via L-3-hydroxyacyl-CoA. It can also use D-3-hydroxyacyl-CoA and cis-3-enoyl-CoA as substrate. This Shewanella baltica (strain OS195) protein is Fatty acid oxidation complex subunit alpha.